A 156-amino-acid chain; its full sequence is Cyclic pyranopterin monophosphate synthase (156 aa).

Residues 73–75 (LCH) and 110–111 (ME) contribute to the substrate site. Residue aspartate 125 is part of the active site.

The protein belongs to the MoaC family. In terms of assembly, homohexamer; trimer of dimers.

The catalysed reaction is (8S)-3',8-cyclo-7,8-dihydroguanosine 5'-triphosphate = cyclic pyranopterin phosphate + diphosphate. It functions in the pathway cofactor biosynthesis; molybdopterin biosynthesis. Catalyzes the conversion of (8S)-3',8-cyclo-7,8-dihydroguanosine 5'-triphosphate to cyclic pyranopterin monophosphate (cPMP). This chain is Cyclic pyranopterin monophosphate synthase, found in Pseudomonas entomophila (strain L48).